The primary structure comprises 97 residues: Large ribosomal subunit protein eL21 (97 aa).

Belongs to the eukaryotic ribosomal protein eL21 family.

In Methanosarcina mazei (strain ATCC BAA-159 / DSM 3647 / Goe1 / Go1 / JCM 11833 / OCM 88) (Methanosarcina frisia), this protein is Large ribosomal subunit protein eL21.